Here is a 971-residue protein sequence, read N- to C-terminus: DNA-directed RNA polymerase subunit Rpo1N (971 aa).

Met1 carries the post-translational modification Blocked amino end (Met). Zn(2+)-binding residues include Cys62, Cys65, Cys72, His75, Cys102, Cys105, Cys149, and Cys152. The segment at 185–204 (SMQPDEDEDDAGVSPQELAE) is disordered. Residues Asp527, Asp529, and Asp531 each coordinate Mg(2+). Residues 951–971 (VEEPPTNLSEHGAAWEVESDD) are disordered.

It belongs to the RNA polymerase beta' chain family. Part of the RNA polymerase complex. The cofactor is Mg(2+). It depends on Zn(2+) as a cofactor. Post-translationally, the N-terminus is blocked.

It is found in the cytoplasm. The catalysed reaction is RNA(n) + a ribonucleoside 5'-triphosphate = RNA(n+1) + diphosphate. Its function is as follows. DNA-dependent RNA polymerase (RNAP) catalyzes the transcription of DNA into RNA using the four ribonucleoside triphosphates as substrates. Forms the clamp head domain. This is DNA-directed RNA polymerase subunit Rpo1N from Halobacterium salinarum (strain ATCC 29341 / DSM 671 / R1).